The following is a 379-amino-acid chain: Lipid-A-disaccharide synthase (379 aa).

This sequence belongs to the LpxB family.

It catalyses the reaction a lipid X + a UDP-2-N,3-O-bis[(3R)-3-hydroxyacyl]-alpha-D-glucosamine = a lipid A disaccharide + UDP + H(+). Its pathway is bacterial outer membrane biogenesis; LPS lipid A biosynthesis. Functionally, condensation of UDP-2,3-diacylglucosamine and 2,3-diacylglucosamine-1-phosphate to form lipid A disaccharide, a precursor of lipid A, a phosphorylated glycolipid that anchors the lipopolysaccharide to the outer membrane of the cell. The polypeptide is Lipid-A-disaccharide synthase (Vibrio cholerae serotype O1 (strain ATCC 39541 / Classical Ogawa 395 / O395)).